The following is a 499-amino-acid chain: ATP synthase subunit alpha (499 aa).

Residue 169–176 (GDRGTGKT) participates in ATP binding.

The protein belongs to the ATPase alpha/beta chains family. As to quaternary structure, F-type ATPases have 2 components, CF(1) - the catalytic core - and CF(0) - the membrane proton channel. CF(1) has five subunits: alpha(3), beta(3), gamma(1), delta(1), epsilon(1). CF(0) has three main subunits: a(1), b(2) and c(9-12). The alpha and beta chains form an alternating ring which encloses part of the gamma chain. CF(1) is attached to CF(0) by a central stalk formed by the gamma and epsilon chains, while a peripheral stalk is formed by the delta and b chains.

The protein localises to the cell inner membrane. It carries out the reaction ATP + H2O + 4 H(+)(in) = ADP + phosphate + 5 H(+)(out). Its function is as follows. Produces ATP from ADP in the presence of a proton gradient across the membrane. The alpha chain is a regulatory subunit. This is ATP synthase subunit alpha from Brachyspira hyodysenteriae (strain ATCC 49526 / WA1).